The chain runs to 471 residues: ATP synthase subunit beta 2 (471 aa).

157-164 (GGAGVGKT) lines the ATP pocket.

The protein belongs to the ATPase alpha/beta chains family. F-type ATPases have 2 components, CF(1) - the catalytic core - and CF(0) - the membrane proton channel. CF(1) has five subunits: alpha(3), beta(3), gamma(1), delta(1), epsilon(1). CF(0) has three main subunits: a(1), b(2) and c(9-12). The alpha and beta chains form an alternating ring which encloses part of the gamma chain. CF(1) is attached to CF(0) by a central stalk formed by the gamma and epsilon chains, while a peripheral stalk is formed by the delta and b chains.

The protein resides in the cell inner membrane. It carries out the reaction ATP + H2O + 4 H(+)(in) = ADP + phosphate + 5 H(+)(out). In terms of biological role, produces ATP from ADP in the presence of a proton gradient across the membrane. The catalytic sites are hosted primarily by the beta subunits. The chain is ATP synthase subunit beta 2 from Pelobacter propionicus (strain DSM 2379 / NBRC 103807 / OttBd1).